The following is a 396-amino-acid chain: Acetyl-CoA acetyltransferase ERG10, cytosolic (396 aa).

Cys91 acts as the Acyl-thioester intermediate in catalysis. Residue Tyr186 participates in K(+) binding. The CoA site is built by Asn227 and Lys230. Residues Ala246, Pro247, and Val347 each coordinate K(+). Residues His351 and Cys381 each act as proton acceptor in the active site. Asn382 contributes to the chloride binding site.

The protein belongs to the thiolase-like superfamily. Thiolase family. In terms of assembly, homotetramer. Requires K(+) as cofactor.

It is found in the cytoplasm. The protein localises to the cytosol. It carries out the reaction 2 acetyl-CoA = acetoacetyl-CoA + CoA. It participates in metabolic intermediate biosynthesis; (R)-mevalonate biosynthesis; (R)-mevalonate from acetyl-CoA: step 1/3. Acetyl-CoA acetyltransferase; part of the first module of ergosterol biosynthesis pathway that includes the early steps of the pathway, conserved across all eukaryotes, and which results in the formation of mevalonate from acetyl-coenzyme A (acetyl-CoA). ERG10B catalyzes the formation of acetoacetyl-CoA from acetyl-CoA. The first module starts with the action of the cytosolic acetyl-CoA acetyltransferase ERG10B that catalyzes the formation of acetoacetyl-CoA. The hydroxymethylglutaryl-CoA synthases ERG13 then condenses acetyl-CoA with acetoacetyl-CoA to form HMG-CoA. The rate-limiting step of the early module is the reduction to mevalonate by the 3-hydroxy-3-methylglutaryl-coenzyme A (HMG-CoA) reductases HMG1. This Gibberella zeae (strain ATCC MYA-4620 / CBS 123657 / FGSC 9075 / NRRL 31084 / PH-1) (Wheat head blight fungus) protein is Acetyl-CoA acetyltransferase ERG10, cytosolic.